Consider the following 1197-residue polypeptide: ATP-dependent helicase/nuclease subunit A (1197 aa).

Residues 2–458 (KNWTTEQQAA…IDLAKNFRSR (457 aa)) enclose the UvrD-like helicase ATP-binding domain. 23-30 (AAAGSGKT) contacts ATP. The region spanning 485–774 (RAALYQGASF…RIMSIHKSKG (290 aa)) is the UvrD-like helicase C-terminal domain.

This sequence belongs to the helicase family. AddA subfamily. In terms of assembly, heterodimer of AddA and AddB/RexB. Mg(2+) serves as cofactor.

It catalyses the reaction Couples ATP hydrolysis with the unwinding of duplex DNA by translocating in the 3'-5' direction.. The catalysed reaction is ATP + H2O = ADP + phosphate + H(+). The heterodimer acts as both an ATP-dependent DNA helicase and an ATP-dependent, dual-direction single-stranded exonuclease. Recognizes the chi site generating a DNA molecule suitable for the initiation of homologous recombination. The AddA nuclease domain is required for chi fragment generation; this subunit has the helicase and 3' -&gt; 5' nuclease activities. This chain is ATP-dependent helicase/nuclease subunit A, found in Alkaliphilus metalliredigens (strain QYMF).